The chain runs to 486 residues: Pentatricopeptide repeat-containing protein At3g06430, chloroplastic (486 aa).

Residues 1 to 36 (MASMSLSFSSSLCSSRIPEGKRRFRHRDVGIVRCVL) constitute a chloroplast transit peptide. PPR repeat units follow at residues 123-157 (KEGT…GLEP), 158-188 (TVEL…MKSF), 194-228 (DVFT…LITP), 229-264 (NTVT…ACKP), 265-299 (DVWT…GIEP), 300-334 (ETRT…EFPW), 335-369 (TTST…GMKA), 370-404 (DTKT…EIPE), 405-439 (NTAF…QCVC), and 440-470 (DSRT…RQKL).

The protein belongs to the PPR family. P subfamily.

It is found in the plastid. It localises to the chloroplast. This chain is Pentatricopeptide repeat-containing protein At3g06430, chloroplastic (EMB2750), found in Arabidopsis thaliana (Mouse-ear cress).